We begin with the raw amino-acid sequence, 160 residues long: Putative UPF0479 protein YNL339W-B (160 aa).

2 helical membrane-spanning segments follow: residues 39 to 59 and 136 to 156; these read IVFC…KVLQ and VPMI…ISQH.

It belongs to the UPF0479 family.

Its subcellular location is the membrane. The polypeptide is Putative UPF0479 protein YNL339W-B (Saccharomyces cerevisiae (strain ATCC 204508 / S288c) (Baker's yeast)).